A 136-amino-acid chain; its full sequence is Histone H3 (136 aa).

The disordered stretch occupies residues Met1–Gly45. Residue Lys5 is modified to N6,N6,N6-trimethyllysine; alternate. Lys5 is subject to N6,N6-dimethyllysine; alternate. Residues Lys5 and Lys10 each carry the N6-methyllysine; alternate modification. The residue at position 10 (Lys10) is an N6-acetyllysine; alternate. At Ser11 the chain carries Phosphoserine. N6,N6-dimethyllysine; alternate is present on Lys15. N6-methyllysine; alternate occurs at positions 15, 19, 24, 28, and 37. An N6-acetyllysine; alternate mark is found at Lys15, Lys19, Lys24, Lys28, and Lys37. An N6,N6,N6-trimethyllysine; alternate mark is found at Lys28 and Lys37. N6,N6-dimethyllysine; alternate is present on residues Lys28 and Lys37. N6-acetyllysine occurs at positions 57 and 65. Residue Lys80 is modified to N6,N6,N6-trimethyllysine; alternate. At Lys80 the chain carries N6,N6-dimethyllysine; alternate. The residue at position 80 (Lys80) is an N6-methyllysine; alternate.

This sequence belongs to the histone H3 family. The nucleosome is a histone octamer containing two molecules each of H2A, H2B, H3 and H4 assembled in one H3-H4 heterotetramer and two H2A-H2B heterodimers. The octamer wraps approximately 147 bp of DNA. Phosphorylated to form H3S10ph. H3S10ph promotes subsequent H3K14ac formation and is required for transcriptional activation through TBP recruitment to the promoters. Post-translationally, mono-, di- and trimethylated by the COMPASS complex to form H3K4me1/2/3. H3K4me activates gene expression by regulating transcription elongation and plays a role in telomere length maintenance. H3K4me enrichment correlates with transcription levels, and occurs in a 5' to 3' gradient with H3K4me3 enrichment at the 5'-end of genes, shifting to H3K4me2 and then H3K4me1. Methylated by SET2 to form H3K36me. H3K36me represses gene expression. Methylated by DOT1 to form H3K79me. H3K79me is required for association of SIR proteins with telomeric regions and for telomeric silencing. The COMPASS-mediated formation of H3K4me2/3 and the DOT1-mediated formation of H3K79me require H2BK123ub1. In terms of processing, acetylation of histone H3 leads to transcriptional activation. H3K14ac formation by GCN5 is promoted by H3S10ph. H3K14ac can also be formed by ESA1. H3K56ac formation occurs predominantly in newly synthesized H3 molecules during G1, S and G2/M of the cell cycle and may be involved in DNA repair.

It localises to the nucleus. Its subcellular location is the chromosome. In terms of biological role, core component of nucleosome. Nucleosomes wrap and compact DNA into chromatin, limiting DNA accessibility to the cellular machineries which require DNA as a template. Histones thereby play a central role in transcription regulation, DNA repair, DNA replication and chromosomal stability. DNA accessibility is regulated via a complex set of post-translational modifications of histones, also called histone code, and nucleosome remodeling. In Mortierella alpina (Oleaginous fungus), this protein is Histone H3 (H3.1).